Reading from the N-terminus, the 540-residue chain is Terminase large subunit (540 aa).

D352, D424, and D523 together coordinate Mn(2+).

This sequence belongs to the skunavirus terminase large subunit family. In terms of assembly, interacts with the terminase small subunit; the active complex is probably heterooligomeric. Mn(2+) serves as cofactor. It depends on Mg(2+) as a cofactor.

In terms of biological role, probable terminase large subunit. The terminase large subunit acts as an ATP driven molecular motor necessary for viral DNA translocation into empty capsids and as an endonuclease that cuts the viral genome to initiate and to end a packaging reaction. The terminase lies at a unique vertex of the procapsid and is composed of two subunits, a small terminase subunit involved in viral DNA recognition (packaging sequence), and a large terminase subunit possessing endonucleolytic and ATPase activities. Both terminase subunits heterooligomerize and are docked on the portal protein to form the packaging machine. The terminase large subunit exhibits endonuclease activity and cleaves the viral genome concatemer. This is Terminase large subunit from Lactococcus lactis (Lactococcus lactis bacteriophage p2).